A 328-amino-acid chain; its full sequence is Methionyl-tRNA formyltransferase (328 aa).

121 to 124 (SLLP) lines the (6S)-5,6,7,8-tetrahydrofolate pocket.

The protein belongs to the Fmt family.

The enzyme catalyses L-methionyl-tRNA(fMet) + (6R)-10-formyltetrahydrofolate = N-formyl-L-methionyl-tRNA(fMet) + (6S)-5,6,7,8-tetrahydrofolate + H(+). Attaches a formyl group to the free amino group of methionyl-tRNA(fMet). The formyl group appears to play a dual role in the initiator identity of N-formylmethionyl-tRNA by promoting its recognition by IF2 and preventing the misappropriation of this tRNA by the elongation apparatus. This Paraburkholderia phytofirmans (strain DSM 17436 / LMG 22146 / PsJN) (Burkholderia phytofirmans) protein is Methionyl-tRNA formyltransferase.